The sequence spans 782 residues: Protein bicaudal D (782 aa).

A coiled-coil region spans residues 15–77 (VQDLQMEVER…RHELDITQEA (63 aa)). The residue at position 103 (Ser103) is a Phosphoserine. The stretch at 107 to 249 (ETSLNLQIFD…LETLQGEREA (143 aa)) forms a coiled coil. Phosphoserine occurs at positions 285, 288, and 305. Position 306 is a phosphothreonine (Thr306). A Phosphoserine modification is found at Ser310. 2 coiled-coil regions span residues 320 to 368 (SEIH…FMSR) and 444 to 477 (TTTL…TLTH). The residue at position 528 (Ser528) is a Phosphoserine. Coiled coils occupy residues 603–630 (EKVN…KREQ) and 695–743 (CEEY…MEMD). The segment at 699–722 (VTQVDDLNRQLEAAEEEKKTLNQL) is interaction with Rab6. Positions 744–782 (REMRHVRRPMPAQRGTSGKSSFSTRPSSRNPASSNANPF) are disordered. Residues 757 to 767 (RGTSGKSSFST) show a composition bias toward polar residues. Residues 768–782 (RPSSRNPASSNANPF) show a composition bias toward low complexity.

Belongs to the BicD family. May homodimerize but does not interact with BicDR. Interacts (via C-terminal domain) with Rab6. As to expression, in ovaries, expressed in oocyte and nurse cells.

Its subcellular location is the cytoplasm. The protein localises to the cytoskeleton. Functionally, this protein is essential for differentiation. It may play a role in localizing of Nanos (a maternal determinant) activity in oocytes. Functions redundantly with BicDR. During oogenesis, plays a specific role, together with Rab6 but independently of Sec5, in the polarization of the oocyte microtubule cytoskeleton, in oskar mRNA localization and in the anterodorsal secretion of grk. Plays a role in the biogenesis of annulate lamellae containing nuclear pore complex components. During macrochaetae development, together with BicDR, involved in Rab 6 and Spn-F stability and distribution and actin cytoskeleton organization. This chain is Protein bicaudal D, found in Drosophila melanogaster (Fruit fly).